The following is a 546-amino-acid chain: ATP synthase F(1) complex catalytic subunit beta, mitochondrial (546 aa).

The transit peptide at 1–45 directs the protein to the mitochondrion; sequence MLGFVGRVAATSASGALRGLGPSPLPQVKVLLRASPAALQSARDY. N6-acetyllysine; alternate occurs at positions 123, 132, and 160. Residues lysine 123, lysine 132, and lysine 160 each carry the N6-succinyllysine; alternate modification. Position 197 is an N6-acetyllysine (lysine 197). Positions 208, 209, 210, 211, 212, and 213 each coordinate ADP. Glycine 208 provides a ligand contact to ATP. Phosphate contacts are provided by glycine 208, valine 209, glycine 210, lysine 211, and threonine 212. 4 residues coordinate ATP: glycine 210, lysine 211, threonine 212, and valine 213. Residue threonine 212 coordinates Mg(2+). Glutamate 237 is a Mg(2+) binding site. Arginine 238 is an ATP binding site. An N6-acetyllysine; alternate mark is found at lysine 258 and lysine 263. An N6-succinyllysine; alternate mark is found at lysine 258 and lysine 263. Threonine 311 is subject to Phosphothreonine. The residue at position 425 (lysine 425) is an N6-acetyllysine. Position 432 is a phosphoserine (serine 432). An N6-acetyllysine mark is found at lysine 479 and lysine 484. The residue at position 521 (lysine 521) is an N6-acetyllysine; alternate. Lysine 521 is subject to N6-succinyllysine; alternate. Residues 521–546 form a disordered region; it reads KLAEEHSATQTSPSPKGAAAXXXRVV.

Belongs to the ATPase alpha/beta chains family. Homotrimer. Component of the ATP synthase complex composed at least of ATP5F1A/subunit alpha, ATP5F1B/subunit beta, ATP5MC1/subunit c (homooctomer), MT-ATP6/subunit a, MT-ATP8/subunit 8, ATP5ME/subunit e, ATP5MF/subunit f, ATP5MG/subunit g, ATP5MK/subunit k, ATP5MJ/subunit j, ATP5F1C/subunit gamma, ATP5F1D/subunit delta, ATP5F1E/subunit epsilon, ATP5PF/subunit F6, ATP5PB/subunit b, ATP5PD/subunit d, ATP5PO/subunit OSCP. ATP synthase complex consists of a soluble F(1) head domain (subunits alpha(3) and beta(3)) - the catalytic core - and a membrane F(0) domain - the membrane proton channel (subunits c, a, 8, e, f, g, k and j). These two domains are linked by a central stalk (subunits gamma, delta, and epsilon) rotating inside the F1 region and a stationary peripheral stalk (subunits F6, b, d, and OSCP). Interacts with PPIF. Interacts with BCL2L1 isoform BCL-X(L); the interaction mediates the association of BCL2L1 isoform BCL-X(L) with the mitochondrial membrane F(1)F(0) ATP synthase and enhances neurons metabolic efficiency. Interacts with CLN5 and PPT1. Interacts with S100A1; this interaction increases F1-ATPase activity. Interacts with MTLN. Interacts with TTC5/STRAP; the interaction results in decreased mitochondrial ATP production.

The protein resides in the mitochondrion inner membrane. The enzyme catalyses ATP + H2O + 4 H(+)(in) = ADP + phosphate + 5 H(+)(out). Catalytic subunit beta, of the mitochondrial membrane ATP synthase complex (F(1)F(0) ATP synthase or Complex V) that produces ATP from ADP in the presence of a proton gradient across the membrane which is generated by electron transport complexes of the respiratory chain. ATP synthase complex consist of a soluble F(1) head domain - the catalytic core - and a membrane F(1) domain - the membrane proton channel. These two domains are linked by a central stalk rotating inside the F(1) region and a stationary peripheral stalk. During catalysis, ATP synthesis in the catalytic domain of F(1) is coupled via a rotary mechanism of the central stalk subunits to proton translocation. In vivo, can only synthesize ATP although its ATP hydrolase activity can be activated artificially in vitro. With the subunit alpha (ATP5F1A), forms the catalytic core in the F(1) domain. In Canis lupus familiaris (Dog), this protein is ATP synthase F(1) complex catalytic subunit beta, mitochondrial.